Reading from the N-terminus, the 87-residue chain is Large ribosomal subunit protein bL31B (87 aa).

It belongs to the bacterial ribosomal protein bL31 family. Type B subfamily. Part of the 50S ribosomal subunit.

The protein is Large ribosomal subunit protein bL31B of Burkholderia multivorans (strain ATCC 17616 / 249).